Here is a 302-residue protein sequence, read N- to C-terminus: Lysosomal thioesterase PPT2 (302 aa).

The first 27 residues, 1 to 27, serve as a signal peptide directing secretion; the sequence is MPGLWRQRLPSAWALLLLPFLPLLLPA. A glycan (N-linked (GlcNAc...) asparagine) is linked at Asn-60. 2 disulfide bridges follow: Cys-109–Cys-117 and Cys-165–Cys-176. Ser-111 functions as the Nucleophile in the catalytic mechanism. N-linked (GlcNAc...) asparagine glycosylation is found at Asn-190 and Asn-206. Residue Asp-228 is part of the active site. An N-linked (GlcNAc...) asparagine glycan is attached at Asn-245. A disulfide bridge links Cys-276 with Cys-296. Residue His-283 is part of the active site. An N-linked (GlcNAc...) asparagine glycan is attached at Asn-289.

Belongs to the palmitoyl-protein thioesterase family.

It localises to the lysosome. The catalysed reaction is hexadecanoyl-CoA + H2O = hexadecanoate + CoA + H(+). It catalyses the reaction S-hexadecanoyl-N-acetylcysteamine + H2O = N-acetylcysteamine + hexadecanoate + H(+). Its function is as follows. Catalyzes the cleavage of thioester bonds from S-palmitoyl-CoA or S-palmitoyl-N-acetylcysteamine (unbranched structures) but does not have activity against palmitoylcysteine or palmitoylated proteins, branched structures or bulky head groups. Conversely, hydrolyzes both long and short chain fatty acyl-CoA substrate. This Rattus norvegicus (Rat) protein is Lysosomal thioesterase PPT2 (Ppt2).